The following is a 167-amino-acid chain: Ribosome maturation factor RimM (167 aa).

One can recognise a PRC barrel domain in the interval 94-166; it reads TGRAYLHELI…YMVVPRFDEF (73 aa).

The protein belongs to the RimM family. Binds ribosomal protein uS19.

The protein localises to the cytoplasm. An accessory protein needed during the final step in the assembly of 30S ribosomal subunit, possibly for assembly of the head region. Essential for efficient processing of 16S rRNA. May be needed both before and after RbfA during the maturation of 16S rRNA. It has affinity for free ribosomal 30S subunits but not for 70S ribosomes. The polypeptide is Ribosome maturation factor RimM (Chlorobium phaeobacteroides (strain DSM 266 / SMG 266 / 2430)).